A 329-amino-acid chain; its full sequence is Replication factor C small subunit 1 (329 aa).

Position 44-51 (44-51 (GPPGTGKT)) interacts with ATP.

Belongs to the activator 1 small subunits family. RfcS subfamily. As to quaternary structure, heteromultimer composed of small subunits (RfcS) and large subunits (RfcL).

In terms of biological role, part of the RFC clamp loader complex which loads the PCNA sliding clamp onto DNA. The sequence is that of Replication factor C small subunit 1 from Pyrobaculum arsenaticum (strain DSM 13514 / JCM 11321 / PZ6).